The chain runs to 481 residues: UDP-glycosyltransferase 88F3 (481 aa).

UDP-alpha-D-glucose contacts are provided by residues serine 288, tryptophan 357–alanine 358, histidine 375–glutamate 383, and tyrosine 397–glutamine 400.

Belongs to the UDP-glycosyltransferase family.

Glycosyltransferase that may possess chalcone and dihydrochalcone 2'-O-glucosyltransferase activity. The polypeptide is UDP-glycosyltransferase 88F3 (Pyrus communis (Pear)).